The sequence spans 297 residues: rRNA 2'-O-methyltransferase fibrillarin (297 aa).

The interval 1-56 is disordered; that stretch reads MRGGFGRGGGGRGGSRGGRGGFGRGGGRGGGRGGGRGGGRGGGRGGGRGGGRGGAG. 13 positions are modified to asymmetric dimethylarginine: arginine 2, arginine 7, arginine 12, arginine 16, arginine 19, arginine 24, arginine 28, arginine 32, arginine 36, arginine 40, arginine 44, arginine 48, and arginine 52. S-adenosyl-L-methionine contacts are provided by residues 149-150, 168-169, 192-193, and 212-215; these read TT, EF, DA, and DVAQ.

This sequence belongs to the methyltransferase superfamily. Fibrillarin family. As to quaternary structure, component of box C/D small nucleolar ribonucleoprotein (snoRNP) particles. It is associated with the U3, U8 and U13 small nuclear RNAs. In terms of processing, by homology to other fibrillarins, some or all of the N-terminal domain arginines are modified to asymmetric dimethylarginine (DMA).

The protein localises to the nucleus. The protein resides in the nucleolus. The enzyme catalyses L-glutaminyl-[histone H2A] + S-adenosyl-L-methionine = N(5)-methyl-L-glutaminyl-[histone H2A] + S-adenosyl-L-homocysteine + H(+). Its function is as follows. S-adenosyl-L-methionine-dependent methyltransferase that has the ability to methylate both RNAs and proteins. Involved in pre-rRNA processing. Utilizes the methyl donor S-adenosyl-L-methionine to catalyze the site-specific 2'-hydroxyl methylation of ribose moieties in pre-ribosomal RNA. Site specificity is provided by a guide RNA that base pairs with the substrate. Methylation occurs at a characteristic distance from the sequence involved in base pairing with the guide RNA. Also acts as a protein methyltransferase by mediating methylation of 'Gln-105' of histone H2A (H2AQ105me), a modification that impairs binding of the FACT complex and is specifically present at 35S ribosomal DNA locus. The chain is rRNA 2'-O-methyltransferase fibrillarin from Leishmania major.